The sequence spans 404 residues: Flavohemoprotein (404 aa).

A Globin domain is found at 1–138 (MLSEQTRSLV…LADTLIGIEN (138 aa)). Residue H85 participates in heme b binding. Catalysis depends on charge relay system residues Y95 and E137. Positions 149-404 (GGWSGWRPFR…EVFGSHPGDD (256 aa)) are reductase. The FAD-binding FR-type domain maps to 152–263 (SGWRPFRVAK…SAPQGDFFLH (112 aa)). FAD-binding positions include Y190 and 206 to 209 (RQYS). 276–281 (GVGQTP) serves as a coordination point for NADP(+). Residue 396 to 399 (VFGS) participates in FAD binding.

This sequence belongs to the globin family. Two-domain flavohemoproteins subfamily. In the C-terminal section; belongs to the flavoprotein pyridine nucleotide cytochrome reductase family. Requires heme b as cofactor. It depends on FAD as a cofactor.

It catalyses the reaction 2 nitric oxide + NADPH + 2 O2 = 2 nitrate + NADP(+) + H(+). The catalysed reaction is 2 nitric oxide + NADH + 2 O2 = 2 nitrate + NAD(+) + H(+). Its function is as follows. Is involved in NO detoxification in an aerobic process, termed nitric oxide dioxygenase (NOD) reaction that utilizes O(2) and NAD(P)H to convert NO to nitrate, which protects the bacterium from various noxious nitrogen compounds. Therefore, plays a central role in the inducible response to nitrosative stress. In Chromobacterium violaceum (strain ATCC 12472 / DSM 30191 / JCM 1249 / CCUG 213 / NBRC 12614 / NCIMB 9131 / NCTC 9757 / MK), this protein is Flavohemoprotein.